A 350-amino-acid polypeptide reads, in one-letter code: Biotin synthase (350 aa).

Residues 38–256 enclose the Radical SAM core domain; it reads NYVQVSTLLS…IAVARIMMPT (219 aa). [4Fe-4S] cluster is bound by residues Cys53, Cys57, and Cys60. Cys97, Cys128, Cys188, and Arg260 together coordinate [2Fe-2S] cluster.

This sequence belongs to the radical SAM superfamily. Biotin synthase family. In terms of assembly, homodimer. The cofactor is [4Fe-4S] cluster. [2Fe-2S] cluster is required as a cofactor.

It catalyses the reaction (4R,5S)-dethiobiotin + (sulfur carrier)-SH + 2 reduced [2Fe-2S]-[ferredoxin] + 2 S-adenosyl-L-methionine = (sulfur carrier)-H + biotin + 2 5'-deoxyadenosine + 2 L-methionine + 2 oxidized [2Fe-2S]-[ferredoxin]. It functions in the pathway cofactor biosynthesis; biotin biosynthesis; biotin from 7,8-diaminononanoate: step 2/2. Its function is as follows. Catalyzes the conversion of dethiobiotin (DTB) to biotin by the insertion of a sulfur atom into dethiobiotin via a radical-based mechanism. This Vibrio vulnificus (strain CMCP6) protein is Biotin synthase.